A 232-amino-acid polypeptide reads, in one-letter code: Cytidylate kinase (232 aa).

10-18 (GPAASGKST) contacts ATP.

This sequence belongs to the cytidylate kinase family. Type 1 subfamily.

Its subcellular location is the cytoplasm. It catalyses the reaction CMP + ATP = CDP + ADP. It carries out the reaction dCMP + ATP = dCDP + ADP. This chain is Cytidylate kinase, found in Phytoplasma mali (strain AT).